Reading from the N-terminus, the 77-residue chain is Small ribosomal subunit protein bS18 (77 aa).

Belongs to the bacterial ribosomal protein bS18 family. In terms of assembly, part of the 30S ribosomal subunit. Forms a tight heterodimer with protein bS6.

Its function is as follows. Binds as a heterodimer with protein bS6 to the central domain of the 16S rRNA, where it helps stabilize the platform of the 30S subunit. This Halalkalibacterium halodurans (strain ATCC BAA-125 / DSM 18197 / FERM 7344 / JCM 9153 / C-125) (Bacillus halodurans) protein is Small ribosomal subunit protein bS18.